Here is an 86-residue protein sequence, read N- to C-terminus: Small ribosomal subunit protein bS20 (86 aa).

Positions 1-27 are disordered; it reads MANNKSAKKRAIQAEKRRQHNASRRSM.

The protein belongs to the bacterial ribosomal protein bS20 family.

Functionally, binds directly to 16S ribosomal RNA. In Vibrio cholerae serotype O1 (strain ATCC 39541 / Classical Ogawa 395 / O395), this protein is Small ribosomal subunit protein bS20.